The following is a 336-amino-acid chain: Probable tRNA pseudouridine synthase B (336 aa).

The active-site Nucleophile is the Asp81. Residues 248–323 (LKKVVVKDSA…VAVDVERVYM (76 aa)) form the PUA domain.

This sequence belongs to the pseudouridine synthase TruB family. Type 2 subfamily.

It catalyses the reaction uridine(55) in tRNA = pseudouridine(55) in tRNA. Could be responsible for synthesis of pseudouridine from uracil-55 in the psi GC loop of transfer RNAs. This chain is Probable tRNA pseudouridine synthase B, found in Methanocaldococcus jannaschii (strain ATCC 43067 / DSM 2661 / JAL-1 / JCM 10045 / NBRC 100440) (Methanococcus jannaschii).